Consider the following 322-residue polypeptide: Beta-1,4-galactosyltransferase 7 (322 aa).

The Cytoplasmic portion of the chain corresponds to methionine 1 to tryptophan 9. A helical; Signal-anchor for type II membrane protein membrane pass occupies residues valine 10–leucine 30. Over glycine 31–threonine 322 the chain is Lumenal. UDP-alpha-D-galactose contacts are provided by proline 82, arginine 84, aspartate 145, and valine 146. A Mn(2+)-binding site is contributed by aspartate 147. The UDP-alpha-D-galactose site is built by tyrosine 177, glycine 185, tryptophan 207, and glycine 208. Leucine 209 serves as a coordination point for beta-D-xylose. UDP-alpha-D-galactose is bound at residue glutamate 210. Beta-D-xylose is bound by residues aspartate 211 and aspartate 212. Residue asparagine 236 is glycosylated (N-linked (GlcNAc...) asparagine). Residues histidine 241, histidine 243, and arginine 250 each coordinate UDP-alpha-D-galactose. Mn(2+) contacts are provided by histidine 241 and histidine 243. 2 cysteine pairs are disulfide-bonded: cysteine 255–cysteine 310 and cysteine 300–cysteine 308.

This sequence belongs to the glycosyltransferase 7 family. The cofactor is Mn(2+). In terms of tissue distribution, expressed in male and female adults. Expressed in head.

Its subcellular location is the golgi apparatus membrane. It carries out the reaction 3-O-(beta-D-xylosyl)-L-seryl-[protein] + UDP-alpha-D-galactose = 3-O-(beta-D-galactosyl-(1-&gt;4)-beta-D-xylosyl)-L-seryl-[protein] + UDP + H(+). It participates in protein modification; protein glycosylation. Its function is as follows. Transfers galactose from UDP-D-Galactose (UDP-Gal) to the acceptor xylose residue in the linkage tetrasaccharide region of the glycosaminoglycan side chain of proteoglycans. No activity towards beta-GlcNAc, beta-Glc, beta-Gal, and beta-GalNAc as acceptors. The polypeptide is Beta-1,4-galactosyltransferase 7 (Drosophila melanogaster (Fruit fly)).